Here is a 503-residue protein sequence, read N- to C-terminus: E3 ubiquitin-protein ligase IE61 (503 aa).

The segment at 19–58 adopts an RING-type zinc-finger fold; the sequence is CAICMSAISGLGKTLPCLHDFCFVCIQTWTSTSAQCPLCR. 3 disordered regions span residues 175 to 194, 367 to 418, and 445 to 503; these read AVIT…PSSR, SGPI…LFVD, and AALP…VRRK. Residues 375–388 show a composition bias toward polar residues; the sequence is GGSTSQDTSVSNIH. Positions 389–403 are enriched in low complexity; sequence RSPPGGSSTQPSSGR. A compositionally biased stretch (basic residues) spans 404–414; the sequence is RPGRPKGVKRR. Over residues 471-480 the composition is skewed to low complexity; it reads PSTSGSSPSP.

Interacts with host BTRC; this interaction seems to inactivate SCF-mediated protein degradation in general.

It carries out the reaction S-ubiquitinyl-[E2 ubiquitin-conjugating enzyme]-L-cysteine + [acceptor protein]-L-lysine = [E2 ubiquitin-conjugating enzyme]-L-cysteine + N(6)-ubiquitinyl-[acceptor protein]-L-lysine.. In terms of biological role, RING-finger E3 ubiquitin ligase that degrades host SP100, one of the major components of ND10 nuclear bodies, thereby disrupting the organization of these bodies. Also plays a role in the inhibition of host NF-kappa-B pathway by blocking the SCF(BTRC)-mediated addition of ubiquitin chains to host IkappaBalpha/NFKBIA, thereby interfering with its degradation. The chain is E3 ubiquitin-protein ligase IE61 from Cercopithecine herpesvirus 9 (strain DHV) (CeHV-9).